Reading from the N-terminus, the 161-residue chain is Endoribonuclease YbeY (161 aa).

Residues His127, His131, and His137 each contribute to the Zn(2+) site.

It belongs to the endoribonuclease YbeY family. Zn(2+) is required as a cofactor.

Its subcellular location is the cytoplasm. Functionally, single strand-specific metallo-endoribonuclease involved in late-stage 70S ribosome quality control and in maturation of the 3' terminus of the 16S rRNA. The protein is Endoribonuclease YbeY of Listeria monocytogenes serotype 4a (strain HCC23).